A 449-amino-acid chain; its full sequence is Aspartate aminotransferase 3, chloroplastic (449 aa).

The N-terminal 43 residues, 1-43 (MKTTHFSSSSSSDRRIGALLRHLNSGSDSDNLSSLYASPTSGG), are a transit peptide targeting the chloroplast. Residues glycine 81, tryptophan 178, and asparagine 231 each coordinate L-aspartate. Lysine 295 bears the N6-(pyridoxal phosphate)lysine mark. Arginine 423 lines the L-aspartate pocket.

Belongs to the class-I pyridoxal-phosphate-dependent aminotransferase family. As to quaternary structure, homodimer. Pyridoxal 5'-phosphate is required as a cofactor. Expressed in roots, cauline leaves, flowers, hypocotyl epidermis and root hair cells.

It localises to the plastid. It is found in the chloroplast. It carries out the reaction L-aspartate + 2-oxoglutarate = oxaloacetate + L-glutamate. Its function is as follows. Amino acid aminotransferase important for the metabolism of amino acids and Krebs-cycle related organic acids. No activity with D-Asp or D-Ala as amino donors. In plants, it is involved in nitrogen metabolism and in aspects of carbon and energy metabolism. This is Aspartate aminotransferase 3, chloroplastic (ASP3) from Arabidopsis thaliana (Mouse-ear cress).